The chain runs to 347 residues: NADH-ubiquinone oxidoreductase chain 2 (347 aa).

11 helical membrane passes run 3 to 23 (PPILIIIMSTVMSGTMIVLTS), 25 to 45 (HWLLTWIGFEMNMLAIIPILM), 60 to 80 (FLTQATASMLLMMGIIINLMF), 96 to 116 (GLVTIALTMKLGMAPFHFWVP), 122 to 142 (ISLSSGMILLTWQKIAPLSVL), 153 to 173 (LLITMAIASVLIGGWGGLNQT), 178 to 198 (ILAYSSIAHMGWMTVILTYNP), 200 to 220 (LMVLNLTIYITMTLSTFMLFM), 237 to 257 (LPLMTSLILMLMMSLGGLPPL), 274 to 294 (DMIILPTFMAITALLNLYFYM), and 323 to 343 (IILLPPLIIISTMLLPMTPMM).

This sequence belongs to the complex I subunit 2 family. Core subunit of respiratory chain NADH dehydrogenase (Complex I) which is composed of 45 different subunits. Interacts with TMEM242.

Its subcellular location is the mitochondrion inner membrane. The enzyme catalyses a ubiquinone + NADH + 5 H(+)(in) = a ubiquinol + NAD(+) + 4 H(+)(out). Core subunit of the mitochondrial membrane respiratory chain NADH dehydrogenase (Complex I) which catalyzes electron transfer from NADH through the respiratory chain, using ubiquinone as an electron acceptor. Essential for the catalytic activity and assembly of complex I. The polypeptide is NADH-ubiquinone oxidoreductase chain 2 (Phoca vitulina (Harbor seal)).